The primary structure comprises 164 residues: Protein-export protein SecB (164 aa).

It belongs to the SecB family. As to quaternary structure, homotetramer, a dimer of dimers. One homotetramer interacts with 1 SecA dimer.

It localises to the cytoplasm. In terms of biological role, one of the proteins required for the normal export of preproteins out of the cell cytoplasm. It is a molecular chaperone that binds to a subset of precursor proteins, maintaining them in a translocation-competent state. It also specifically binds to its receptor SecA. The protein is Protein-export protein SecB of Chromohalobacter salexigens (strain ATCC BAA-138 / DSM 3043 / CIP 106854 / NCIMB 13768 / 1H11).